The sequence spans 184 residues: Protein GrpE (184 aa).

The segment at 1–32 is disordered; that stretch reads MEEQKQTPSTPTPDTAAEAAVNAATAAPETAG. Residues 12 to 32 show a composition bias toward low complexity; sequence TPDTAAEAAVNAATAAPETAG.

Belongs to the GrpE family. Homodimer.

The protein resides in the cytoplasm. Functionally, participates actively in the response to hyperosmotic and heat shock by preventing the aggregation of stress-denatured proteins, in association with DnaK and GrpE. It is the nucleotide exchange factor for DnaK and may function as a thermosensor. Unfolded proteins bind initially to DnaJ; upon interaction with the DnaJ-bound protein, DnaK hydrolyzes its bound ATP, resulting in the formation of a stable complex. GrpE releases ADP from DnaK; ATP binding to DnaK triggers the release of the substrate protein, thus completing the reaction cycle. Several rounds of ATP-dependent interactions between DnaJ, DnaK and GrpE are required for fully efficient folding. The sequence is that of Protein GrpE from Cupriavidus pinatubonensis (strain JMP 134 / LMG 1197) (Cupriavidus necator (strain JMP 134)).